Consider the following 150-residue polypeptide: 3-hydroxyacyl-[acyl-carrier-protein] dehydratase FabZ (150 aa).

H57 is an active-site residue.

This sequence belongs to the thioester dehydratase family. FabZ subfamily.

The protein localises to the cytoplasm. The enzyme catalyses a (3R)-hydroxyacyl-[ACP] = a (2E)-enoyl-[ACP] + H2O. In terms of biological role, involved in unsaturated fatty acids biosynthesis. Catalyzes the dehydration of short chain beta-hydroxyacyl-ACPs and long chain saturated and unsaturated beta-hydroxyacyl-ACPs. This chain is 3-hydroxyacyl-[acyl-carrier-protein] dehydratase FabZ, found in Actinobacillus succinogenes (strain ATCC 55618 / DSM 22257 / CCUG 43843 / 130Z).